The sequence spans 296 residues: Probable lipid kinase YegS-like (296 aa).

Residues 1–130 (MPHTLLILNG…IDLAQVNDKH (130 aa)) form the DAGKc domain. Residues threonine 37, 63–69 (GDGTINE), and threonine 92 contribute to the ATP site. Residues leucine 212, aspartate 215, and leucine 217 each contribute to the Mg(2+) site. Glutamate 268 (proton acceptor) is an active-site residue.

This sequence belongs to the diacylglycerol/lipid kinase family. YegS lipid kinase subfamily. Mg(2+) serves as cofactor. The cofactor is Ca(2+).

The protein localises to the cytoplasm. Probably phosphorylates lipids; the in vivo substrate is unknown. The sequence is that of Probable lipid kinase YegS-like from Yersinia enterocolitica serotype O:8 / biotype 1B (strain NCTC 13174 / 8081).